We begin with the raw amino-acid sequence, 1122 residues long: Protein CAF130 (1122 aa).

The tract at residues M1–D24 is disordered. A compositionally biased stretch (polar residues) spans A11–D24. S1042 carries the phosphoserine modification.

Subunit of the 1.0 MDa CCR4-NOT core complex that contains CCR4, CAF1, NOT1, NOT2, NOT3, NOT4, NOT5, CAF40 and CAF130. In the complex interacts with NOT1. The core complex probably is part of a less characterized 1.9 MDa CCR4-NOT complex.

The protein localises to the cytoplasm. It is found in the nucleus. In terms of biological role, acts as a component of the CCR4-NOT core complex, which in the nucleus seems to be a general transcription factor, and in the cytoplasm the major mRNA deadenylase involved in mRNA turnover. The sequence is that of Protein CAF130 (CAF130) from Saccharomyces cerevisiae (strain ATCC 204508 / S288c) (Baker's yeast).